Consider the following 692-residue polypeptide: Elongation factor G (692 aa).

Positions 8 to 282 (AKTRNIGIMA…AVIAYLPSPL (275 aa)) constitute a tr-type G domain. Residues 17 to 24 (AHVDAGKT), 81 to 85 (DTPGH), and 135 to 138 (NKMD) each bind GTP.

This sequence belongs to the TRAFAC class translation factor GTPase superfamily. Classic translation factor GTPase family. EF-G/EF-2 subfamily.

The protein resides in the cytoplasm. In terms of biological role, catalyzes the GTP-dependent ribosomal translocation step during translation elongation. During this step, the ribosome changes from the pre-translocational (PRE) to the post-translocational (POST) state as the newly formed A-site-bound peptidyl-tRNA and P-site-bound deacylated tRNA move to the P and E sites, respectively. Catalyzes the coordinated movement of the two tRNA molecules, the mRNA and conformational changes in the ribosome. The sequence is that of Elongation factor G from Streptococcus equi subsp. zooepidemicus (strain MGCS10565).